Consider the following 353-residue polypeptide: Phosphoribosylformylglycinamidine cyclo-ligase (353 aa).

The protein belongs to the AIR synthase family.

It localises to the cytoplasm. It catalyses the reaction 2-formamido-N(1)-(5-O-phospho-beta-D-ribosyl)acetamidine + ATP = 5-amino-1-(5-phospho-beta-D-ribosyl)imidazole + ADP + phosphate + H(+). The protein operates within purine metabolism; IMP biosynthesis via de novo pathway; 5-amino-1-(5-phospho-D-ribosyl)imidazole from N(2)-formyl-N(1)-(5-phospho-D-ribosyl)glycinamide: step 2/2. This Dinoroseobacter shibae (strain DSM 16493 / NCIMB 14021 / DFL 12) protein is Phosphoribosylformylglycinamidine cyclo-ligase.